A 661-amino-acid polypeptide reads, in one-letter code: CD180 antigen (661 aa).

A signal peptide spans methionine 1–serine 23. Over tryptophan 24–glycine 626 the chain is Extracellular. Positions alanine 33–asparagine 53 constitute an LRRNT domain. N-linked (GlcNAc...) asparagine glycans are attached at residues asparagine 34, asparagine 53, asparagine 70, and asparagine 78. LRR repeat units lie at residues threonine 54–arginine 75, asparagine 78–serine 99, glutamine 102–glycine 123, serine 126–asparagine 147, asparagine 150–proline 171, asparagine 174–serine 195, and asparagine 201–serine 221. N-linked (GlcNAc...) asparagine glycans are attached at residues asparagine 201, asparagine 234, and asparagine 244. 5 LRR repeats span residues serine 275–cysteine 296, glutamine 299–leucine 320, leucine 322–asparagine 343, serine 346–leucine 366, and asparagine 371–glutamine 391. Asparagine 394 and asparagine 402 each carry an N-linked (GlcNAc...) asparagine glycan. LRR repeat units follow at residues histidine 397–glutamate 418, glutamine 421–glutamine 442, phenylalanine 446–alanine 466, valine 470–glutamine 493, serine 497–serine 518, lysine 521–lysine 544, and isoleucine 546–proline 564. Residue asparagine 451 is glycosylated (N-linked (GlcNAc...) asparagine). Asparagine 573 carries N-linked (GlcNAc...) asparagine glycosylation. Residues asparagine 577–isoleucine 627 enclose the LRRCT domain. The chain crosses the membrane as a helical span at residues isoleucine 627 to valine 650. Residues lysine 651 to isoleucine 661 lie on the Cytoplasmic side of the membrane.

It belongs to the Toll-like receptor family. As to quaternary structure, M-shaped tetramer of two CD180-LY86 heterodimers. In terms of tissue distribution, expressed mainly on mature peripherical B cells. Detected in spleen, lymph node and appendix. Not detected in pre-B and -T cells.

The protein localises to the cell membrane. Its function is as follows. May cooperate with MD-1 and TLR4 to mediate the innate immune response to bacterial lipopolysaccharide (LPS) in B-cells. Leads to NF-kappa-B activation. Also involved in the life/death decision of B-cells. This is CD180 antigen (CD180) from Homo sapiens (Human).